We begin with the raw amino-acid sequence, 93 residues long: Peptide YY-like (93 aa).

The N-terminal stretch at 1 to 27 (MVSPRVRLAALALSVCAILCLGMHASA) is a signal peptide. Tyr63 carries the tyrosine amide modification. The propeptide at 65–93 (KRALTPENWIYRDPAEERVTYGLDDYAMW) is C-terminal extension.

It belongs to the NPY family. Gut and medial reticulospinal neuron system in the brainstem.

It localises to the secreted. Gastrointestinal hormone and neuropeptide. The chain is Peptide YY-like (pyy) from Lampetra fluviatilis (European river lamprey).